The primary structure comprises 83 residues: Translational regulator CsrA (83 aa).

It belongs to the CsrA/RsmA family. In terms of assembly, homodimer; the beta-strands of each monomer intercalate to form a hydrophobic core, while the alpha-helices form wings that extend away from the core.

The protein resides in the cytoplasm. A translational regulator that binds mRNA to regulate translation initiation and/or mRNA stability. Usually binds in the 5'-UTR at or near the Shine-Dalgarno sequence preventing ribosome-binding, thus repressing translation. Its main target seems to be the major flagellin gene, while its function is anatagonized by FliW. In Thermotoga maritima (strain ATCC 43589 / DSM 3109 / JCM 10099 / NBRC 100826 / MSB8), this protein is Translational regulator CsrA.